Here is a 615-residue protein sequence, read N- to C-terminus: Protein ENHANCED DISEASE RESISTANCE 4 (615 aa).

Disordered stretches follow at residues 46–271 (IAPS…DDDE), 292–336 (YKEQ…GRQG), and 549–592 (THDI…RGSP). Composition is skewed to polar residues over residues 63-89 (NEPQ…SSPG) and 119-129 (GDGTNEIQEQE). Residues 104 to 129 (MESTEKELDDLELSNGDGTNEIQEQE) adopt a coiled-coil conformation. A compositionally biased stretch (basic and acidic residues) spans 134–148 (DSEKNEREDNSRLES). A compositionally biased stretch (low complexity) spans 159-168 (GSGSSSGSLS). 2 stretches are compositionally biased toward polar residues: residues 296–314 (GASS…ITTY) and 552–564 (INAN…TSES). The span at 565–577 (PIDKAPSKPEKLR) shows a compositional bias: basic and acidic residues.

As to quaternary structure, interacts with RLK902. Binds and recruits EDR1 at the powdery mildew (e.g. G.cichoracearum) penetration site on the plasma membrane. Interacts with CHC2. In terms of tissue distribution, expressed in stems and rosette leaves, and weakly in inflorescences. Not detected in roots.

It is found in the cell membrane. The protein resides in the endosome. Functionally, plays a negative role in salicylic acid (SA)-mediated resistance to powdery mildew (e.g. Golovinomyces cichoracearum). May modulate plant immunity by regulating the relocation of EDR1 by interacting with CHC2 and modulating endocytosis. In Arabidopsis thaliana (Mouse-ear cress), this protein is Protein ENHANCED DISEASE RESISTANCE 4.